The sequence spans 46 residues: uncharacterized protein (46 aa).

This is an uncharacterized protein from Saccharomyces cerevisiae (strain ATCC 204508 / S288c) (Baker's yeast).